Here is a 174-residue protein sequence, read N- to C-terminus: Adenylate kinase (174 aa).

Positions 12-41 are NMP; the sequence is STGDMLRAAIKAGTLLGLEAKKIIDEGGLV. AMP contacts are provided by residues T13, R18, 39-41, 67-70, and Q74; these read GLV and GFPR. Residues 104–141 are LID; it reads GRRVHLASGRTYHVTYNPPKVEGKDDVTGEDLIQRDDD. Residues R105 and 114–115 each bind ATP; that span reads TY. R138 and R149 together coordinate AMP.

It belongs to the adenylate kinase family. As to quaternary structure, monomer.

It localises to the cytoplasm. It carries out the reaction AMP + ATP = 2 ADP. The protein operates within purine metabolism; AMP biosynthesis via salvage pathway; AMP from ADP: step 1/1. Catalyzes the reversible transfer of the terminal phosphate group between ATP and AMP. Plays an important role in cellular energy homeostasis and in adenine nucleotide metabolism. This is Adenylate kinase from Neisseria polysaccharea.